Consider the following 191-residue polypeptide: Holliday junction branch migration complex subunit RuvA (191 aa).

Residues 1 to 64 (MIGKLTGTLL…EDAQLLYGFA (64 aa)) are domain I. The interval 65–140 (TAPERQAFRA…KLGADLGASH (76 aa)) is domain II. Residues 140-142 (HGP) are flexible linker. Residues 143 to 191 (AVSGAQADILQALLALGYNDKEAAAALKALPAQVEVSDGIKWALKALTK) are domain III.

Belongs to the RuvA family. As to quaternary structure, homotetramer. Forms an RuvA(8)-RuvB(12)-Holliday junction (HJ) complex. HJ DNA is sandwiched between 2 RuvA tetramers; dsDNA enters through RuvA and exits via RuvB. An RuvB hexamer assembles on each DNA strand where it exits the tetramer. Each RuvB hexamer is contacted by two RuvA subunits (via domain III) on 2 adjacent RuvB subunits; this complex drives branch migration. In the full resolvosome a probable DNA-RuvA(4)-RuvB(12)-RuvC(2) complex forms which resolves the HJ.

It localises to the cytoplasm. The RuvA-RuvB-RuvC complex processes Holliday junction (HJ) DNA during genetic recombination and DNA repair, while the RuvA-RuvB complex plays an important role in the rescue of blocked DNA replication forks via replication fork reversal (RFR). RuvA specifically binds to HJ cruciform DNA, conferring on it an open structure. The RuvB hexamer acts as an ATP-dependent pump, pulling dsDNA into and through the RuvAB complex. HJ branch migration allows RuvC to scan DNA until it finds its consensus sequence, where it cleaves and resolves the cruciform DNA. In Verminephrobacter eiseniae (strain EF01-2), this protein is Holliday junction branch migration complex subunit RuvA.